We begin with the raw amino-acid sequence, 127 residues long: Large-conductance mechanosensitive channel (127 aa).

3 helical membrane passes run 9 to 29, 32 to 52, and 75 to 95; these read EFAM…GVAF, IVTA…LGGV, and VIDF…INLL.

Belongs to the MscL family. Homopentamer.

The protein resides in the cell inner membrane. Its function is as follows. Channel that opens in response to stretch forces in the membrane lipid bilayer. May participate in the regulation of osmotic pressure changes within the cell. This Legionella pneumophila (strain Corby) protein is Large-conductance mechanosensitive channel.